The primary structure comprises 142 residues: Interleukin-3 (142 aa).

An N-terminal signal peptide occupies residues 1-18 (MSHLPILLLLLLVSPGLQ). N-linked (GlcNAc...) asparagine glycosylation occurs at asparagine 33. An intrachain disulfide couples cysteine 34 to cysteine 102.

This sequence belongs to the IL-3 family. Monomer. In terms of tissue distribution, activated T-cells, mast cells, natural killer cells.

It localises to the secreted. In terms of biological role, granulocyte/macrophage colony-stimulating factors are cytokines that act in hematopoiesis by controlling the production, differentiation, and function of 2 related white cell populations of the blood, the granulocytes and the monocytes-macrophages. Functionally, this CSF induces granulocytes, macrophages, mast cells, stem cells, erythroid cells, eosinophils and megakaryocytes. This Callithrix jacchus (White-tufted-ear marmoset) protein is Interleukin-3 (IL3).